The chain runs to 1097 residues: DNA-directed RNA polymerase subunit beta (1097 aa).

Residues 1070–1097 (LMQDVNPRRNTPSRPTYESLGTSEYEED) form a disordered region. The span at 1077 to 1091 (RRNTPSRPTYESLGT) shows a compositional bias: polar residues.

The protein belongs to the RNA polymerase beta chain family. As to quaternary structure, in cyanobacteria the RNAP catalytic core is composed of 2 alpha, 1 beta, 1 beta', 1 gamma and 1 omega subunit. When a sigma factor is associated with the core the holoenzyme is formed, which can initiate transcription.

It catalyses the reaction RNA(n) + a ribonucleoside 5'-triphosphate = RNA(n+1) + diphosphate. DNA-dependent RNA polymerase catalyzes the transcription of DNA into RNA using the four ribonucleoside triphosphates as substrates. This Prochlorococcus marinus (strain MIT 9515) protein is DNA-directed RNA polymerase subunit beta.